The chain runs to 253 residues: uncharacterized protein (253 aa).

A signal peptide spans 1–25; that stretch reads MRKKKFLSKVSFGSLFLLCGTVLSA. Cysteine 26 is lipidated: N-palmitoyl cysteine. Cysteine 26 is lipidated: S-diacylglycerol cysteine.

It belongs to the MG439/MG440 family.

Its subcellular location is the cell membrane. This is an uncharacterized protein from Mycoplasma pneumoniae (strain ATCC 29342 / M129 / Subtype 1) (Mycoplasmoides pneumoniae).